We begin with the raw amino-acid sequence, 407 residues long: Na(+)-translocating NADH-quinone reductase subunit F (407 aa).

A helical transmembrane segment spans residues 3–23; sequence IILGVVMFTLIVLALTVMILF. Residues 32-126 form the 2Fe-2S ferredoxin-type domain; it reads GDITVEINED…NLKIELPEEI (95 aa). 4 residues coordinate [2Fe-2S] cluster: C69, C75, C78, and C110. The region spanning 129 to 269 is the FAD-binding FR-type domain; sequence VKKWTCEVIS…SGPFGEFFAK (141 aa).

This sequence belongs to the NqrF family. Composed of six subunits; NqrA, NqrB, NqrC, NqrD, NqrE and NqrF. It depends on [2Fe-2S] cluster as a cofactor. FAD is required as a cofactor.

The protein resides in the cell inner membrane. It catalyses the reaction a ubiquinone + n Na(+)(in) + NADH + H(+) = a ubiquinol + n Na(+)(out) + NAD(+). Its function is as follows. NQR complex catalyzes the reduction of ubiquinone-1 to ubiquinol by two successive reactions, coupled with the transport of Na(+) ions from the cytoplasm to the periplasm. The first step is catalyzed by NqrF, which accepts electrons from NADH and reduces ubiquinone-1 to ubisemiquinone by a one-electron transfer pathway. The sequence is that of Na(+)-translocating NADH-quinone reductase subunit F from Yersinia pseudotuberculosis serotype O:1b (strain IP 31758).